A 278-amino-acid polypeptide reads, in one-letter code: Diaminopimelate epimerase (278 aa).

Asn13 and Asn66 together coordinate substrate. Cys75 (proton donor) is an active-site residue. Substrate is bound by residues 76-77 (GN), Asn162, Asn195, and 213-214 (ER). Cys222 functions as the Proton acceptor in the catalytic mechanism. Residue 223–224 (GT) participates in substrate binding.

Belongs to the diaminopimelate epimerase family. Homodimer.

It is found in the cytoplasm. The enzyme catalyses (2S,6S)-2,6-diaminopimelate = meso-2,6-diaminopimelate. It functions in the pathway amino-acid biosynthesis; L-lysine biosynthesis via DAP pathway; DL-2,6-diaminopimelate from LL-2,6-diaminopimelate: step 1/1. Functionally, catalyzes the stereoinversion of LL-2,6-diaminopimelate (L,L-DAP) to meso-diaminopimelate (meso-DAP), a precursor of L-lysine and an essential component of the bacterial peptidoglycan. The sequence is that of Diaminopimelate epimerase from Trichodesmium erythraeum (strain IMS101).